The sequence spans 315 residues: MTFTQQVKKELSILPINVKTSKSELSAIFRLNGIYHLGTAVGNTLEVQTQNPASARRTYQLLSQTYEADIQTNIERGGSAKIFGLHRYGVITMKQADQILADIQLDPFSSDRRVPEVFLNSQAKQQAFLRAAFLSTGSVNAPNSKNYHLEISAADEDLIEQIFSIMNNRNFNLGAKIADRRNKLIVYLKTGERISDFLSIIQATSSMLHFEDARIMSDMRNSANRLANADNANVTRMAEAAERQYEAMDFLRQQNRLDNLPEKLKIVADLRLKNPEASLSDLAGMIEGQELTKSGINHRMRKLMQIVKELNHKKV.

The H-T-H motif DNA-binding region spans 278–312 (SLSDLAGMIEGQELTKSGINHRMRKLMQIVKELNH).

This sequence belongs to the WhiA family.

Functionally, involved in cell division and chromosome segregation. The sequence is that of Probable cell division protein WhiA from Oenococcus oeni (strain ATCC BAA-331 / PSU-1).